The following is a 214-amino-acid chain: Large ribosomal subunit protein uL1 (214 aa).

It belongs to the universal ribosomal protein uL1 family. As to quaternary structure, component of the large ribosomal subunit.

Its subcellular location is the cytoplasm. In terms of biological role, component of the large ribosomal subunit. The ribosome is a large ribonucleoprotein complex responsible for the synthesis of proteins in the cell. The protein is Large ribosomal subunit protein uL1 (RPL10A) of Entamoeba histolytica (strain ATCC 30459 / HM-1:IMSS / ABRM).